The sequence spans 374 residues: MDPLGPAKPQWLWRRCLAGLLFQLLVAVCFFSYLRVSRDDATGSPRPGLMAVEPVTGAPNGSRCQDSMATPAHPTLLILLWTWPFNTPVALPRCSEMVPGAADCNITADSSVYPQADAVIVHHWDIMYNPSANLPPPTRPQGQRWIWFSMESPSNCRHLEALDGYFNLTMSYRSDSDIFTPYGWLEPWSGQPAHPPLNLSAKTELVAWAVSNWKPDSARVRYYQSLQAHLKVDVYGRSHKPLPKGTMMETLSRYKFYLAFENSLHPDYITEKLWRNALEAWAVPVVLGPSRSNYERFLPPDAFIHVDDFQSPKDLARYLQELDKDHARYLSYFHWRETLRPRSFSWALAFCKACWKLQQESRYQTVRSIAAWFT.

Residues 1 to 15 (MDPLGPAKPQWLWRR) lie on the Cytoplasmic side of the membrane. Residues 16 to 34 (CLAGLLFQLLVAVCFFSYL) traverse the membrane as a helical; Signal-anchor for type II membrane protein segment. At 35-374 (RVSRDDATGS…TVRSIAAWFT (340 aa)) the chain is on the lumenal side. 4 N-linked (GlcNAc...) asparagine glycosylation sites follow: N60, N105, N167, and N198.

Belongs to the glycosyltransferase 10 family. As to expression, liver, colon and testis and trace amounts in T-cells and brain.

The protein resides in the golgi apparatus. Its subcellular location is the golgi stack membrane. The enzyme catalyses a beta-D-galactosyl-(1-&gt;3)-N-acetyl-beta-D-glucosaminyl derivative + GDP-beta-L-fucose = a beta-D-galactosyl-(1-&gt;3)-[alpha-L-fucosyl-(1-&gt;4)]-N-acetyl-beta-D-glucosaminyl derivative + GDP + H(+). The catalysed reaction is an N-acetyl-alpha-neuraminyl-(2-&gt;3)-beta-D-galactosyl-(1-&gt;4)-N-acetyl-beta-D-glucosaminyl derivative + GDP-beta-L-fucose = an alpha-Neu5Ac-(2-&gt;3)-beta-D-Gal-(1-&gt;4)-[alpha-L-Fuc-(1-&gt;3)]-beta-D-GlcNAc derivative + GDP + H(+). It carries out the reaction an alpha-Neu5Ac-(2-&gt;3)-beta-D-Gal-(1-&gt;4)-beta-D-GlcNAc-(1-&gt;3)-beta-D-Gal-(1-&gt;4)-[alpha-L-Fuc-(1-&gt;3)]-beta-D-GlcNAc derivative + GDP-beta-L-fucose = an alpha-Neu5Ac-(2-&gt;3)-beta-D-Gal-(1-&gt;4)-[alpha-L-Fuc-(1-&gt;3)]-beta-D-GlcNAc-(1-&gt;3)-beta-D-Gal-(1-&gt;4)-[alpha-L-Fuc-(1-&gt;3)]-beta-D-GlcNAc derivative + GDP + H(+). It catalyses the reaction a beta-D-galactosyl-(1-&gt;4)-N-acetyl-beta-D-glucosaminyl derivative + GDP-beta-L-fucose = a beta-D-galactosyl-(1-&gt;4)-[alpha-L-fucosyl-(1-&gt;3)]-N-acetyl-beta-D-glucosaminyl derivative + GDP + H(+). The enzyme catalyses a neolactoside nLc4Cer + GDP-beta-L-fucose = a neolactoside III(3)-alpha-Fuc-nLc4Cer + GDP + H(+). The catalysed reaction is a neolactoside nLc6Cer + GDP-beta-L-fucose = beta-D-galactosyl-(1-&gt;4)-N-acetyl-beta-D-glucosaminyl-(1-&gt;3)-beta-D-galactosyl-(1-&gt;4)-[alpha-L-fucosyl-(1-&gt;3)]-N-acetyl-beta-D-glucosaminyl-(1-&gt;3)-beta-D-galactosyl-(1-&gt;4)-beta-D-glucosyl-(1&lt;-&gt;1')-ceramide + GDP + H(+). It carries out the reaction a neolactoside nLc6Cer(d18:1(4E)) + GDP-beta-L-fucose = a neolactoside III(3)-alpha-Fuc-nLc6Cer(d18:1(4E)) + GDP + H(+). It catalyses the reaction a neolactoside nLc4Cer(d18:1(4E)) + GDP-beta-L-fucose = a neolactoside III(3)-alpha-Fuc-nLc4Cer(d18:1(4E)) + GDP + H(+). The enzyme catalyses a neolactoside VI(3)-alpha-NeuNAc-nLc6Cer + GDP-beta-L-fucose = a neolactoside VI(3)-alpha-NeuAc,III(3)-alphaFuc-nLc6Cer + GDP + H(+). The catalysed reaction is beta-D-galactosyl-(1-&gt;4)-N-acetyl-D-glucosamine + GDP-beta-L-fucose = beta-D-galactosyl-(1-&gt;4)-[alpha-L-fucosyl-(1-&gt;3)]-N-acetyl-D-glucosamine + GDP + H(+). It carries out the reaction N-acetyl-alpha-neuraminosyl-(2-&gt;3)-beta-D-galactosyl-(1-&gt;4)-N-acetyl-beta-D-glucosamine + GDP-beta-L-fucose = N-acetyl-alpha-neuraminosyl-(2-&gt;3)-beta-D-galactosyl-(1-&gt;4)-[alpha-L-fucosyl-(1-&gt;3)]-N-acetyl-beta-D-glucosamine + GDP + H(+). It catalyses the reaction alpha-L-Fuc-(1-&gt;2)-beta-D-Gal-(1-&gt;4)-D-GlcNAc + GDP-beta-L-fucose = alpha-L-Fuc-(1-&gt;2)-beta-D-Gal-(1-&gt;4)-[alpha-L-Fuc-(1-&gt;3)]-D-GlcNAc + GDP + H(+). The enzyme catalyses an alpha-Neu5Ac-(2-&gt;3)-beta-D-Gal-(1-&gt;3)-D-GlcNAc derivative + GDP-beta-L-fucose = an alpha-Neu5Ac-(2-&gt;3)-beta-D-Gal-(1-&gt;3)-[alpha-L-Fuc-(1-&gt;4)]-beta-D-GlcNAc derivative + GDP + H(+). The protein operates within protein modification; protein glycosylation. In terms of biological role, catalyzes preferentially the transfer of L-fucose, from a guanosine diphosphate-beta-L-fucose, to the N-acetyl-beta-D-glucosamine (GlcNAc) of an N-acetyllactosamine unit (type 2 chain) of an oligosaccharide, or a glycoprotein- and a glycolipid-linked N-acetyllactosamine unit via an alpha (1,3) linkage and participates in the surface expression of VIM-2, Lewis X/SSEA-1 and sialyl Lewis X antigens. Preferentially transfers fucose to the GlcNAc of an internal N-acetyllactosamine unit of a poly-N-acetyllactosamine chain acceptor substrate. Also catalyzes to a lesser extend the transfer of L-fucose to the GlcNAc of a type 1 (beta-D-galactosyl-(1-&gt;3)-N-acetyl-beta-D-glucosaminyl) or H-type 1 (alpha-L-Fuc-(1-&gt;2)-beta-D-Gal-(1-&gt;3)-D-GlcNAc) chain oligosaccharide via an alpha (1,4) linkage. Preferentially catalyzes sialylated type 2 oligosaccharide acceptors over neutral type 2 or H type 2 (alpha-L-Fuc-(1-&gt;2)-beta-D-Gal-(1-&gt;4)-D-GlcNAc) oligosaccharide acceptors. Lactose-based structures are also acceptor substrates. The protein is 4-galactosyl-N-acetylglucosaminide 3-alpha-L-fucosyltransferase FUT5 of Homo sapiens (Human).